A 390-amino-acid polypeptide reads, in one-letter code: ATP-sensitive inward rectifier potassium channel 11 (390 aa).

Topologically, residues 1–65 are cytoplasmic; sequence MLSRKGIIPE…LQDVFTTLVD (65 aa). ATP-binding residues include Asn48 and Arg50. A helical membrane pass occupies residues 66 to 92; the sequence is LKWPHTLLIFTMSFLCSWLLFAMVWWL. The Extracellular portion of the chain corresponds to 93 to 116; that stretch reads IAFAHGDLAPGEGTTVPCVTSIHS. A disulfide bridge connects residues Cys110 and Cys142. Residues 117-133 constitute an intramembrane region (discontinuously helical; Pore-forming); the sequence is FSSAFLFSIEVQVTIGF. 2 residues coordinate K(+): Thr130 and Phe133. The Selectivity filter motif lies at 130–135; the sequence is TIGFGG. At 134–142 the chain is on the extracellular side; that stretch reads GGRMVTEEC. The chain crosses the membrane as a helical span at residues 143–171; that stretch reads PLAILILIVQNIVGLMINAIMLGCIFMKT. Residues 172–390 are Cytoplasmic-facing; it reads SQAHRRAETL…RFSISPDSLS (219 aa). Position 176 (Arg176) interacts with a 1,2-diacyl-sn-glycero-3-phospho-(1D-myo-inositol-4,5-bisphosphate). Residue Tyr330 participates in ATP binding. Thr341 is modified (phosphothreonine; by MAPK1). Phosphoserine; by MAPK1 is present on Ser385.

This sequence belongs to the inward rectifier-type potassium channel (TC 1.A.2.1) family. KCNJ11 subfamily. As to quaternary structure, homotetramer; the homotetramer binds four ATP molecules (one ATP per subunit). Forms an heterooctamer with ABCC8/SUR1; one KCNJ11 homotetramer interacts with four ABCC8/SUR1 molecules. Interacts with ABCC9/SUR2. Post-translationally, phosphorylation by MAPK1 results in changes in channel gating that destabilize the closed states and reduce the ATP sensitivity.

The protein localises to the membrane. It carries out the reaction K(+)(in) = K(+)(out). With respect to regulation, KATP channels are regulated by cytoplasmic ATP/ADP ratios; ATP inhibits the channel by closing the pore, while ADP activates the channel. Activated by phosphatidylinositol 4,5-biphosphate (PtdIns(4,5)P2). In terms of biological role, inward rectifier potassium channel that forms the pore of ATP-sensitive potassium channels (KATP), regulating potassium permeability as a function of cytoplasmic ATP and ADP concentrations in many different cells. Inward rectifier potassium channels are characterized by a greater tendency to allow potassium to flow into the cell rather than out of it. Their voltage dependence is regulated by the concentration of extracellular potassium; as external potassium is raised, the voltage range of the channel opening shifts to more positive voltages. The inward rectification is mainly due to the blockage of outward current by internal magnesium. Can be blocked by extracellular barium. In pancreatic cells, it forms KATP channels with ABCC8/SUR1. Can form cardiac and smooth muscle-type KATP channels with ABCC9. The chain is ATP-sensitive inward rectifier potassium channel 11 (KCNJ11) from Cavia porcellus (Guinea pig).